The primary structure comprises 71 residues: Disintegrin applaggin (71 aa).

The Disintegrin domain maps to 1-71 (EAGEECDCGS…SAGCPRNPFH (71 aa)). Intrachain disulfides connect C6/C21, C8/C16, C15/C38, C29/C35, C34/C58, and C47/C65. The Cell attachment site signature appears at 50 to 52 (RGD).

The protein belongs to the venom metalloproteinase (M12B) family. P-II subfamily. P-IIa sub-subfamily. Monomer (disintegrin). Expressed by the venom gland.

The protein localises to the secreted. In terms of biological role, inhibits fibrinogen interaction with platelets. Acts by binding to alpha-IIb/beta-3 (ITGA2B/ITGB3) on the platelet surface and inhibits aggregation induced by ADP, thrombin, platelet-activating factor and collagen. The chain is Disintegrin applaggin from Agkistrodon piscivorus piscivorus (Eastern cottonmouth).